The sequence spans 225 residues: NAD(P)H-quinone oxidoreductase subunit K, chloroplastic (225 aa).

[4Fe-4S] cluster is bound by residues Cys43, Cys44, Cys108, and Cys139.

It belongs to the complex I 20 kDa subunit family. In terms of assembly, NDH is composed of at least 16 different subunits, 5 of which are encoded in the nucleus. [4Fe-4S] cluster serves as cofactor.

Its subcellular location is the plastid. The protein localises to the chloroplast thylakoid membrane. The enzyme catalyses a plastoquinone + NADH + (n+1) H(+)(in) = a plastoquinol + NAD(+) + n H(+)(out). It catalyses the reaction a plastoquinone + NADPH + (n+1) H(+)(in) = a plastoquinol + NADP(+) + n H(+)(out). In terms of biological role, NDH shuttles electrons from NAD(P)H:plastoquinone, via FMN and iron-sulfur (Fe-S) centers, to quinones in the photosynthetic chain and possibly in a chloroplast respiratory chain. The immediate electron acceptor for the enzyme in this species is believed to be plastoquinone. Couples the redox reaction to proton translocation, and thus conserves the redox energy in a proton gradient. This Atropa belladonna (Belladonna) protein is NAD(P)H-quinone oxidoreductase subunit K, chloroplastic.